We begin with the raw amino-acid sequence, 229 residues long: MAEKKAEKRAEKRKFNTEAWEPKTQIGRMVKEGTISDINYIMDKGLPLLEPEIVDALLPDLEEQVLDVKLVQRMHKSGRRARYRATVVVGNKNGYVGVGMGKSKEVGPAIRKAIAHAKLSLIKVRIGCGSWECGCGYPHSIPFTAKGACGSVKVELLPAPRGVGLVAGNVAKAVLGLAGIKDAWTKTFGDTRTTYNFAEATFDALNNLNFVRCLPAQKEKLGLTEGRVL.

The S5 DRBM domain maps to 61 to 124; the sequence is LEEQVLDVKL…AHAKLSLIKV (64 aa).

Belongs to the universal ribosomal protein uS5 family. As to quaternary structure, part of the 30S ribosomal subunit. Contacts protein S4.

Functionally, with S4 and S12 plays an important role in translational accuracy. This Methanococcus maripaludis (strain C7 / ATCC BAA-1331) protein is Small ribosomal subunit protein uS5.